The primary structure comprises 30 residues: ALWKNMLKGIGKLAGQAALGAVKTLVGAES.

Expressed by the skin glands.

It is found in the secreted. In terms of biological role, antibacterial activity against Gram-positive bacteria S.aureus and E.faecalis, and Gram-negative bacteria P.aeruginosa and E.coli. In Phyllomedusa distincta (Monkey frog), this protein is Dermaseptin-DI4.